Reading from the N-terminus, the 451-residue chain is UPF0210 protein APL_1491 (451 aa).

The protein belongs to the UPF0210 family. Homodimer.

The protein is UPF0210 protein APL_1491 of Actinobacillus pleuropneumoniae serotype 5b (strain L20).